The following is a 311-amino-acid chain: Pyrimidine-specific ribonucleoside hydrolase RihA (311 aa).

The active site involves histidine 240.

Belongs to the IUNH family. RihA subfamily.

Hydrolyzes cytidine or uridine to ribose and cytosine or uracil, respectively. The protein is Pyrimidine-specific ribonucleoside hydrolase RihA of Salmonella agona (strain SL483).